We begin with the raw amino-acid sequence, 503 residues long: Arabinose import ATP-binding protein AraG 1 (503 aa).

2 consecutive ABC transporter domains span residues L5–R240 and R251–T497. Position 37 to 44 (G37 to S44) interacts with ATP.

Belongs to the ABC transporter superfamily. Arabinose importer (TC 3.A.1.2.2) family. In terms of assembly, the complex is composed of two ATP-binding proteins (AraG), two transmembrane proteins (AraH) and a solute-binding protein (AraF).

It is found in the cell inner membrane. The catalysed reaction is L-arabinose(out) + ATP + H2O = L-arabinose(in) + ADP + phosphate + H(+). Functionally, part of the ABC transporter complex AraFGH involved in arabinose import. Responsible for energy coupling to the transport system. The chain is Arabinose import ATP-binding protein AraG 1 from Burkholderia cenocepacia (strain HI2424).